The following is a 164-amino-acid chain: Lipoprotein signal peptidase (164 aa).

Helical transmembrane passes span 12–32 (WLWLVVVVLIIDLGSKYLILQ), 70–90 (WFFAGIAIGISVILVVMMYRS), and 102–122 (ALIIGGALGNLFDRLWHGFVV). Active-site residues include Asp-123 and Asp-141. Residues 137 to 157 (FNLADTAICVGAALIVLEGFL) traverse the membrane as a helical segment.

It belongs to the peptidase A8 family.

Its subcellular location is the cell inner membrane. The enzyme catalyses Release of signal peptides from bacterial membrane prolipoproteins. Hydrolyzes -Xaa-Yaa-Zaa-|-(S,diacylglyceryl)Cys-, in which Xaa is hydrophobic (preferably Leu), and Yaa (Ala or Ser) and Zaa (Gly or Ala) have small, neutral side chains.. The protein operates within protein modification; lipoprotein biosynthesis (signal peptide cleavage). Its function is as follows. This protein specifically catalyzes the removal of signal peptides from prolipoproteins. This is Lipoprotein signal peptidase from Escherichia coli O6:K15:H31 (strain 536 / UPEC).